The chain runs to 250 residues: Small ribosomal subunit protein uS2 (250 aa).

This sequence belongs to the universal ribosomal protein uS2 family.

The polypeptide is Small ribosomal subunit protein uS2 (Paraburkholderia xenovorans (strain LB400)).